The primary structure comprises 247 residues: Cationic trypsin-3 (247 aa).

An N-terminal signal peptide occupies residues 1–15 (MKALIFLAFLGAAVA). Positions 16–24 (LPLDDDDDK) are cleaved as a propeptide — activation peptide. Residues 25 to 245 (IVGGYTCQKN…YVNWIQQTVA (221 aa)) enclose the Peptidase S1 domain. 6 cysteine pairs are disulfide-bonded: Cys31–Cys161, Cys49–Cys65, Cys133–Cys234, Cys140–Cys207, Cys172–Cys186, and Cys197–Cys221. His64 serves as the catalytic Charge relay system. Ca(2+)-binding residues include Glu76, Asn78, Val81, and Glu86. Asp108 acts as the Charge relay system in catalysis. The active-site Charge relay system is the Ser201.

This sequence belongs to the peptidase S1 family. Ca(2+) serves as cofactor.

Its subcellular location is the secreted. The protein localises to the extracellular space. It carries out the reaction Preferential cleavage: Arg-|-Xaa, Lys-|-Xaa.. In Rattus norvegicus (Rat), this protein is Cationic trypsin-3 (Try3).